The following is a 482-amino-acid chain: Glutamate--tRNA ligase (482 aa).

The 'HIGH' region signature appears at 9 to 19 (PSPTGPIHVGN). Residues Cys106, Cys108, Cys133, and Asp135 each contribute to the Zn(2+) site. The 'KMSKS' region signature appears at 250-254 (KLSKR). Lys253 is a binding site for ATP.

The protein belongs to the class-I aminoacyl-tRNA synthetase family. Glutamate--tRNA ligase type 1 subfamily. In terms of assembly, monomer. Zn(2+) serves as cofactor.

It is found in the cytoplasm. It carries out the reaction tRNA(Glu) + L-glutamate + ATP = L-glutamyl-tRNA(Glu) + AMP + diphosphate. Catalyzes the attachment of glutamate to tRNA(Glu) in a two-step reaction: glutamate is first activated by ATP to form Glu-AMP and then transferred to the acceptor end of tRNA(Glu). The protein is Glutamate--tRNA ligase of Symbiobacterium thermophilum (strain DSM 24528 / JCM 14929 / IAM 14863 / T).